The following is a 221-amino-acid chain: Aspartic protease inhibitor 1 (221 aa).

An N-terminal signal peptide occupies residues 1–23 (MMKCLFFLCLCLFPILVFSSTFT). A propeptide spanning residues 24–32 (SQNPINLPS) is cleaved from the precursor. Positions 26 to 31 (NPINLP) match the Vacuolar targeting signal motif. N-linked (GlcNAc...) asparagine glycosylation is present at asparagine 51. Disulfide bonds link cysteine 80/cysteine 125 and cysteine 174/cysteine 186.

Belongs to the protease inhibitor I3 (leguminous Kunitz-type inhibitor) family. Tubers, young leaves and flower bud. Not detected in root, stem or mature leaves.

The protein resides in the vacuole. Functionally, inhibitor of cathepsin D (aspartic protease). May also inhibit trypsin and chymotrypsin (serine proteases). Protects the plant by inhibiting proteases of invading organisms. The sequence is that of Aspartic protease inhibitor 1 from Solanum tuberosum (Potato).